The sequence spans 446 residues: Na(+)-translocating NADH-quinone reductase subunit A (446 aa).

This sequence belongs to the NqrA family. In terms of assembly, composed of six subunits; NqrA, NqrB, NqrC, NqrD, NqrE and NqrF.

The enzyme catalyses a ubiquinone + n Na(+)(in) + NADH + H(+) = a ubiquinol + n Na(+)(out) + NAD(+). NQR complex catalyzes the reduction of ubiquinone-1 to ubiquinol by two successive reactions, coupled with the transport of Na(+) ions from the cytoplasm to the periplasm. NqrA to NqrE are probably involved in the second step, the conversion of ubisemiquinone to ubiquinol. The polypeptide is Na(+)-translocating NADH-quinone reductase subunit A (Vibrio cholerae serotype O1 (strain ATCC 39541 / Classical Ogawa 395 / O395)).